A 128-amino-acid chain; its full sequence is UPF0325 protein KPN78578_01770 (128 aa).

Belongs to the UPF0325 family.

The polypeptide is UPF0325 protein KPN78578_01770 (Klebsiella pneumoniae subsp. pneumoniae (strain ATCC 700721 / MGH 78578)).